The following is a 213-amino-acid chain: Imidazole glycerol phosphate synthase subunit HisH (213 aa).

The 210-residue stretch at 4 to 213 (SIAIVDYGMG…LYRNFVHWNP (210 aa)) folds into the Glutamine amidotransferase type-1 domain. The active-site Nucleophile is the Cys83. Active-site residues include His193 and Glu195.

As to quaternary structure, heterodimer of HisH and HisF.

It localises to the cytoplasm. It carries out the reaction 5-[(5-phospho-1-deoxy-D-ribulos-1-ylimino)methylamino]-1-(5-phospho-beta-D-ribosyl)imidazole-4-carboxamide + L-glutamine = D-erythro-1-(imidazol-4-yl)glycerol 3-phosphate + 5-amino-1-(5-phospho-beta-D-ribosyl)imidazole-4-carboxamide + L-glutamate + H(+). It catalyses the reaction L-glutamine + H2O = L-glutamate + NH4(+). It participates in amino-acid biosynthesis; L-histidine biosynthesis; L-histidine from 5-phospho-alpha-D-ribose 1-diphosphate: step 5/9. Its function is as follows. IGPS catalyzes the conversion of PRFAR and glutamine to IGP, AICAR and glutamate. The HisH subunit catalyzes the hydrolysis of glutamine to glutamate and ammonia as part of the synthesis of IGP and AICAR. The resulting ammonia molecule is channeled to the active site of HisF. The polypeptide is Imidazole glycerol phosphate synthase subunit HisH (Burkholderia pseudomallei (strain K96243)).